Consider the following 300-residue polypeptide: Aspartate carbamoyltransferase catalytic subunit (300 aa).

Residues arginine 50 and threonine 51 each coordinate carbamoyl phosphate. Residue lysine 78 participates in L-aspartate binding. Carbamoyl phosphate is bound by residues arginine 100, histidine 127, and glutamine 130. L-aspartate contacts are provided by arginine 160 and arginine 210. Positions 253 and 254 each coordinate carbamoyl phosphate.

Belongs to the aspartate/ornithine carbamoyltransferase superfamily. ATCase family. In terms of assembly, heterododecamer (2C3:3R2) of six catalytic PyrB chains organized as two trimers (C3), and six regulatory PyrI chains organized as three dimers (R2).

It catalyses the reaction carbamoyl phosphate + L-aspartate = N-carbamoyl-L-aspartate + phosphate + H(+). It functions in the pathway pyrimidine metabolism; UMP biosynthesis via de novo pathway; (S)-dihydroorotate from bicarbonate: step 2/3. In terms of biological role, catalyzes the condensation of carbamoyl phosphate and aspartate to form carbamoyl aspartate and inorganic phosphate, the committed step in the de novo pyrimidine nucleotide biosynthesis pathway. The sequence is that of Aspartate carbamoyltransferase catalytic subunit from Staphylococcus saprophyticus subsp. saprophyticus (strain ATCC 15305 / DSM 20229 / NCIMB 8711 / NCTC 7292 / S-41).